A 114-amino-acid polypeptide reads, in one-letter code: uncharacterized protein (114 aa).

The next 2 helical transmembrane spans lie at 58 to 78 (CLLG…FFLL) and 94 to 114 (SISY…FCLA).

It localises to the membrane. This is an uncharacterized protein from Saccharomyces cerevisiae (strain ATCC 204508 / S288c) (Baker's yeast).